The sequence spans 134 residues: Small ribosomal subunit protein uS11 (134 aa).

A disordered region spans residues 1–24 (MATKMAGVKRAGRKRKERKNIERG).

This sequence belongs to the universal ribosomal protein uS11 family. Part of the 30S ribosomal subunit. Interacts with proteins S7 and S18. Binds to IF-3.

Functionally, located on the platform of the 30S subunit, it bridges several disparate RNA helices of the 16S rRNA. Forms part of the Shine-Dalgarno cleft in the 70S ribosome. The protein is Small ribosomal subunit protein uS11 of Acetivibrio thermocellus (strain ATCC 27405 / DSM 1237 / JCM 9322 / NBRC 103400 / NCIMB 10682 / NRRL B-4536 / VPI 7372) (Clostridium thermocellum).